The sequence spans 560 residues: MAHSKEIPSFRWTQSLRRELGMFTEPTKSSVLNDAKLIADSLDFTQVSQVQRLLRKSKRGDTDLDKLRDLNKEVDRLMSMKSVQNNTVLKVGDLGKDELMDLASDLEKLKKKIGDRESNSPRMYMGNLTQSQLEKRAGILRTLGFQQQRGAAGGVVRLWDVSDPSKLNNQFGSMPALTIACMTVQGGETMNNVVQALTSLGLLYTVKYPNLDDLEKLTLEHDCLQIITKDESALNISGYNFSLSAAVKAGASLIDGGNMLETIKVTPNNFSSIVKAALNVKRREGMFIDERPGNRNPYENLLYKLCLSGEGWPYIGSRSQILGRSWDNTSVDLNARPVTGPRAPEKNGQNIRLSNLSEMQEAIVKEAMRKLDSSDTIWMDIEGPPTDPVELAVFQPSSGNYVHCFRKPHDEKGFKNGSRHSHGILLKDLEDAQPGLLSYVIGLLPQGSVITVQGADDIKKLFDIHGRKDLKLVDVRLTGEQSRIFEQEVWEKFGHLCRAHNGVIVPKKKNKEANSTKEPHCALLDCIMFQSVLDGHLPDTIPIQLLPNTLVFQAKSAFVM.

The binding site for the cap structure m7GTP stretch occupies residues 54 to 236 (LRKSKRGDTD…ITKDESALNI (183 aa)). Positions 380 and 382 each coordinate Mn(2+). The Zn(2+) site is built by E390, C497, H500, and C521. D525 serves as a coordination point for Mn(2+).

This sequence belongs to the arenaviridae nucleocapsid protein family. Homomultimerizes to form the nucleocapsid. Binds to viral genomic RNA. Interacts with glycoprotein G2. Interacts with protein Z; this interaction probably directs the encapsidated genome to budding sites. Interacts with protein L; this interaction does not interfere with Z-L interaction. Interacts with host IKBKE (via Protein kinase domain); the interaction inhibits IKBKE kinase activity.

It localises to the virion. It is found in the host cytoplasm. Functionally, encapsidates the genome, protecting it from nucleases. The encapsidated genomic RNA is termed the nucleocapsid (NC). Serves as template for viral transcription and replication. The increased presence of protein N in host cell does not seem to trigger the switch from transcription to replication as observed in other negative strain RNA viruses. Through the interaction with host IKBKE, strongly inhibits the phosphorylation and nuclear translocation of host IRF3, a protein involved in interferon activation pathway, leading to the inhibition of interferon-beta and IRF3-dependent promoters activation. Also encodes a functional 3'-5' exoribonuclease that degrades preferentially dsRNA substrates and thereby participates in the suppression of interferon induction. In Homo sapiens (Human), this protein is Nucleoprotein.